The chain runs to 216 residues: Large ribosomal subunit protein uL3 (216 aa).

Position 157 is an N5-methylglutamine (Q157).

Belongs to the universal ribosomal protein uL3 family. In terms of assembly, part of the 50S ribosomal subunit. Forms a cluster with proteins L14 and L19. In terms of processing, methylated by PrmB.

Its function is as follows. One of the primary rRNA binding proteins, it binds directly near the 3'-end of the 23S rRNA, where it nucleates assembly of the 50S subunit. This chain is Large ribosomal subunit protein uL3, found in Xanthomonas campestris pv. campestris (strain 8004).